Reading from the N-terminus, the 154-residue chain is Basic phospholipase A2 PC20 (154 aa).

Residues 1–21 (MYPAHLLVLLAVCVSLLGASA) form the signal peptide. A propeptide spanning residues 22 to 27 (ISPRPL) is cleaved from the precursor. 7 cysteine pairs are disulfide-bonded: C38-C98, C54-C143, C56-C72, C71-C125, C78-C118, C87-C111, and C105-C116. Positions 55, 57, and 59 each coordinate Ca(2+). H75 is a catalytic residue. D76 provides a ligand contact to Ca(2+). Residue D119 is part of the active site.

Belongs to the phospholipase A2 family. Group I subfamily. D49 sub-subfamily. Requires Ca(2+) as cofactor. In terms of tissue distribution, expressed by the venom gland.

The protein localises to the secreted. The enzyme catalyses a 1,2-diacyl-sn-glycero-3-phosphocholine + H2O = a 1-acyl-sn-glycero-3-phosphocholine + a fatty acid + H(+). In terms of biological role, snake venom phospholipase A2 (PLA2) that inhibits neuromuscular transmission by blocking acetylcholine release from the nerve termini. PLA2 catalyzes the calcium-dependent hydrolysis of the 2-acyl groups in 3-sn-phosphoglycerides. The chain is Basic phospholipase A2 PC20 from Laticauda colubrina (Yellow-lipped sea krait).